A 103-amino-acid chain; its full sequence is MSEEKPKEGVKTENDHINLKVAGQDGSVVQFKIKRHTPLSKLMKAYCERQGLSMRQIRFRFDGQPINETDTPAQLEMEDEDTIDVFQQQTGGVPESSLAGHSF.

Residues lysine 5 and lysine 7 each participate in a glycyl lysine isopeptide (Lys-Gly) (interchain with G-Cter in SUMO2) cross-link. Lysine 11 is covalently cross-linked (Glycyl lysine isopeptide (Lys-Gly) (interchain with G-Cter in SUMO); alternate). A Glycyl lysine isopeptide (Lys-Gly) (interchain with G-Cter in SUMO2); alternate cross-link involves residue lysine 11. The Ubiquitin-like domain occupies 15–92 (DHINLKVAGQ…IDVFQQQTGG (78 aa)). Glycine 92 participates in a covalent cross-link: Glycyl lysine isopeptide (Gly-Lys) (interchain with K-? in acceptor proteins). The propeptide occupies 93 to 103 (VPESSLAGHSF).

The protein belongs to the ubiquitin family. SUMO subfamily. Covalently attached to a number of proteins. Interacts with BMAL1. Interacts with USP25 (via ts SIM domain); the interaction sumoylates USP25 and inhibits its ubiquitin hydrolyzing activity. Interacts with SAE2 and UBE2I. Polymeric chains can be formed through Lys-11 cross-linking. In terms of processing, cleavage of precursor form by SENP1, SENP2 or SENP5 is necessary for function. Expressed predominantly in liver.

It localises to the cytoplasm. The protein localises to the nucleus. Its subcellular location is the PML body. Functionally, ubiquitin-like protein which can be covalently attached to target lysines either as a monomer or as a lysine-linked polymer. Does not seem to be involved in protein degradation and may function as an antagonist of ubiquitin in the degradation process. Plays a role in a number of cellular processes such as nuclear transport, DNA replication and repair, mitosis and signal transduction. Covalent attachment to its substrates requires prior activation by the E1 complex SAE1-SAE2 and linkage to the E2 enzyme UBE2I, and can be promoted by an E3 ligase such as PIAS1-4, RANBP2 or CBX4. Plays a role in the regulation of sumoylation status of SETX. The protein is Small ubiquitin-related modifier 3 of Homo sapiens (Human).